A 385-amino-acid polypeptide reads, in one-letter code: WD repeat-containing protein 74 (385 aa).

WD repeat units lie at residues arginine 40–glutamine 80, cysteine 83–aspartate 122, arginine 128–phenylalanine 168, aspartate 179–valine 220, threonine 224–lysine 266, and glycine 267–histidine 306. Position 214 is a phosphoserine (serine 214). Lysine 311 is modified (N6-methyllysine). The interval serine 320–serine 385 is required for nucleolar and nuclear location. A disordered region spans residues aspartate 323 to serine 385. Residues alanine 372–serine 385 show a composition bias toward basic residues.

As to quaternary structure, isoform 1 interacts (through WDR repeats) with NVL; the interaction is independent of RNA or pre-60S ribosome particles. Isoform 2 does not interact with NVL. Interacts with MTREX; the interaction dissociation in a late stage of rRNA synthesis is required for appropriate maturation of pre-60S particles and depends on the ATPase activity of NVL.

It is found in the nucleus. Its subcellular location is the nucleolus. Its function is as follows. Regulatory protein of the MTREX-exosome complex involved in the synthesis of the 60S ribosomal subunit. Participates in an early cleavage of the pre-rRNA processing pathway in cooperation with NVL. This Bos taurus (Bovine) protein is WD repeat-containing protein 74 (WDR74).